A 636-amino-acid chain; its full sequence is TNFAIP3-interacting protein 1 (636 aa).

A coiled-coil region spans residues 20–73 (EASAAFERLVKENSRLKEKMQGIKMLGELLEESQMEATRLRQKAEELVKDNELL). Positions 61–71 (QKAEELVKDNE) are enriched in basic and acidic residues. 2 disordered regions span residues 61-151 (QKAE…GPLP) and 252-283 (MSNGNKEGASGRPGSPKMEGTGKKAVAGQQQA). Residue Ser-77 is modified to Phosphoserine. The segment at 94–412 (SNVTASPTAP…SPLTRQREYQ (319 aa)) is interaction with Nef. The span at 131–142 (EEQNSPESSSHA) shows a compositional bias: polar residues. A coiled-coil region spans residues 196 to 258 (SKVHKNEQRT…KLLMSNGNKE (63 aa)). A Phosphoserine modification is found at Ser-284. The stretch at 294–535 (VALGAAEKKV…RKAKASGERY (242 aa)) forms a coiled coil. The interval 351–367 (DLEAEREQKQRDFDRKL) is interaction with Shigella flexneri ipah9.8. At Ser-403 the chain carries Phosphoserine. Positions 431-588 (TPPSSPPTAF…MEHPPPLPNS (158 aa)) are required for inhibitory activity of TNF-induced NF-kappa-B activation. Thr-438 carries the phosphothreonine modification. Ser-442 bears the Phosphoserine mark. The tract at residues 452 to 510 (KQELVTQNELLKQQVKIFEEDFQRERSDRERMNEEKEELKKQVEKLQAQVTLSNAQLKA) is ubiquitin-binding domain (UBD). The Nuclear localization signal motif lies at 524-530 (QKRKAKA). Phosphotyrosine is present on Tyr-552. Arg-571 is subject to Asymmetric dimethylarginine. Position 599 is an asymmetric dimethylarginine; alternate (Arg-599). At Arg-599 the chain carries Omega-N-methylarginine; alternate. The tract at residues 603–636 (GGVRNPNQSSQVMDPPTARPTEPESPKNDREGPQ) is disordered. The segment covering 623–636 (TEPESPKNDREGPQ) has biased composition (basic and acidic residues). Ser-627 carries the phosphoserine modification.

In terms of assembly, interacts with TNFAIP3 and IKBKG (polyubiquitinated); facilitates TNFAIP3-mediated de-ubiquitination of NEMO/IKBKG. Interacts with polyubiquitin. Interacts with MAPK1, SELPLG and PIK3CD. Interacts with IRAK1 (polyubiquitinated). Interacts with MYD88; the interaction is indicative for participation in an activated TLR-signaling complex. Interacts with HIV-1 matrix protein. Interacts with TAX1BP1. As to quaternary structure, (Microbial infection) Interacts with Shigella flexneri ipah9.8; the interaction promotes polyubiquitination of IKBKG. Phosphorylation at Tyr-552 by SRC-family kinases recruits phosphoinositide-3-kinase (PI3K) PIK3CD:p85 heterodimer which results in integrin activation and leukocyte adhesion to activated endothelium during inflammation. Ubiquitous. Strongly expressed in peripheral blood lymphocytes, spleen and skeletal muscle, and is weakly expressed in the brain. In peripheral blood mononucleocytes, isoform 4 is mainly expressed and isoform 1 and isoform 7 are almost not expressed. Expression of isoform 1 and isoform 7 increases in leukemic cells.

It is found in the cytoplasm. The protein resides in the nucleus. Inhibits NF-kappa-B activation and TNF-induced NF-kappa-B-dependent gene expression by regulating TAX1BP1 and A20/TNFAIP3-mediated deubiquitination of IKBKG; proposed to link A20/TNFAIP3 to ubiquitinated IKBKG. Involved in regulation of EGF-induced ERK1/ERK2 signaling pathway; blocks MAPK3/MAPK1 nuclear translocation and MAPK1-dependent transcription. Increases cell surface CD4(T4) antigen expression. Involved in the anti-inflammatory response of macrophages and positively regulates TLR-induced activation of CEBPB. Involved in the prevention of autoimmunity; this function implicates binding to polyubiquitin. Involved in leukocyte integrin activation during inflammation; this function is mediated by association with SELPLG and dependent on phosphorylation by SRC-family kinases. Interacts with HIV-1 matrix protein and is packaged into virions and overexpression can inhibit viral replication. May regulate matrix nuclear localization, both nuclear import of PIC (Preintegration complex) and export of GAG polyprotein and viral genomic RNA during virion production. In case of infection, promotes association of IKBKG with Shigella flexneri E3 ubiquitin-protein ligase ipah9.8 p which in turn promotes polyubiquitination of IKBKG leading to its proteasome-dependent degradation and thus is perturbing NF-kappa-B activation during bacterial infection. This chain is TNFAIP3-interacting protein 1 (TNIP1), found in Homo sapiens (Human).